The chain runs to 763 residues: Protein translocase subunit SecA 2 (763 aa).

ATP-binding positions include Gln-83, 101 to 105 (GEGKT), and Asp-490.

It belongs to the SecA family. As to quaternary structure, monomer and homodimer. Part of the essential Sec protein translocation apparatus which comprises SecA, SecYEG and auxiliary proteins SecDF. Other proteins may also be involved.

The protein resides in the cell membrane. It is found in the cytoplasm. The catalysed reaction is ATP + H2O + cellular proteinSide 1 = ADP + phosphate + cellular proteinSide 2.. In terms of biological role, part of the Sec protein translocase complex. Interacts with the SecYEG preprotein conducting channel. Has a central role in coupling the hydrolysis of ATP to the transfer of proteins into and across the cell membrane, serving as an ATP-driven molecular motor driving the stepwise translocation of polypeptide chains across the membrane. This Corynebacterium glutamicum (strain ATCC 13032 / DSM 20300 / JCM 1318 / BCRC 11384 / CCUG 27702 / LMG 3730 / NBRC 12168 / NCIMB 10025 / NRRL B-2784 / 534) protein is Protein translocase subunit SecA 2.